The following is a 109-amino-acid chain: Large ribosomal subunit protein uL18c (109 aa).

The protein belongs to the universal ribosomal protein uL18 family. Part of the 50S ribosomal subunit; contacts the 5S rRNA.

The protein resides in the plastid. It is found in the chloroplast. Its function is as follows. Binds 5S rRNA, forms part of the central protuberance of the 50S subunit. This Cyanidioschyzon merolae (strain NIES-3377 / 10D) (Unicellular red alga) protein is Large ribosomal subunit protein uL18c (rpl18).